Reading from the N-terminus, the 102-residue chain is Protein S100-A11 (102 aa).

At Ser-2 the chain carries Phosphoserine. Thr-7 carries the phosphothreonine modification. EF-hand domains lie at 12–47 and 52–87; these read ESLI…LAAF and KDPG…LAVA. Lys-24 carries the post-translational modification N6-acetyllysine. Residues Ser-28, Thr-30, Glu-35, Asp-65, Asn-67, Asp-69, Gln-71, and Glu-76 each coordinate Ca(2+).

It belongs to the S-100 family. As to quaternary structure, homodimer; disulfide-linked. Post-translationally, phosphorylation at Thr-7 significantly suppresses homodimerization and promotes association with NCL/nucleolin which induces nuclear translocation. As to expression, smooth muscle and non-muscle tissues.

The protein resides in the cytoplasm. It localises to the nucleus. Its function is as follows. Facilitates the differentiation and the cornification of keratinocytes. In Oryctolagus cuniculus (Rabbit), this protein is Protein S100-A11 (S100A11).